The chain runs to 32 residues: Photosystem II reaction center protein T (32 aa).

Residues Ala3 to Phe23 traverse the membrane as a helical segment.

The protein belongs to the PsbT family. As to quaternary structure, PSII is composed of 1 copy each of membrane proteins PsbA, PsbB, PsbC, PsbD, PsbE, PsbF, PsbH, PsbI, PsbJ, PsbK, PsbL, PsbM, PsbT, PsbY, PsbZ, Psb30/Ycf12, at least 3 peripheral proteins of the oxygen-evolving complex and a large number of cofactors. It forms dimeric complexes.

The protein resides in the plastid. It localises to the chloroplast thylakoid membrane. In terms of biological role, found at the monomer-monomer interface of the photosystem II (PS II) dimer, plays a role in assembly and dimerization of PSII. PSII is a light-driven water plastoquinone oxidoreductase, using light energy to abstract electrons from H(2)O, generating a proton gradient subsequently used for ATP formation. In Psilotum nudum (Whisk fern), this protein is Photosystem II reaction center protein T.